Consider the following 383-residue polypeptide: Protein ctg-1 (383 aa).

Positions Pro-73–Gly-247 constitute a CRAL-TRIO domain. The 110-residue stretch at Lys-271–Ile-380 folds into the GOLD domain.

As to expression, highly expressed in cells of the pi uterine cell lineage.

Its subcellular location is the cytoplasm. It is found in the cytosol. Its function is as follows. Vesicle trafficking protein. Functions in uterine cells to promote basement membrane (BM) mobility and BM gap formation during tissue remodeling. This chain is Protein ctg-1, found in Caenorhabditis elegans.